The following is a 1714-amino-acid chain: Collagen alpha-1(XXIV) chain (1714 aa).

The first 35 residues, 1–35, serve as a signal peptide directing secretion; sequence MHLRAHRTRRGKVSPTAKTKSLLHFIVLCVAGVVV. Positions 141-217 constitute a Laminin G-like domain; sequence KLVVHIRGKQ…MNNNSIHFEG (77 aa). N-linked (GlcNAc...) asparagine glycosylation is found at Asn-155, Asn-321, and Asn-376. Collagen-like domains lie at 487–542, 552–611, 660–719, 741–797, 798–857, 858–887, 888–947, 948–1007, 1011–1052, 1053–1112, 1116–1170, 1172–1196, 1201–1249, 1252–1306, 1309–1353, 1354–1413, and 1420–1479; these read LRGP…PGFS, GDQG…EGNP, GPAG…KGEQ, GPPG…RGPP, GPPG…TGPV, GLPGEVGMTGSIGEKGERGSPGPLGPQGEK, GVMG…KGEK, GDQG…PGEM, GPPG…PGAP, GEEG…PGQR, GKKG…GIPG, RGHQGQPGPSGLPGPKGEKGYPGED, GPPG…GEPG, GEQG…GNPG, GPPG…QGPK, GEQG…EGDA, and GPKG…PGPR. The segment at 487–1481 is disordered; sequence LRGPKGDTGP…PPGAPGPRKQ (995 aa). The segment covering 496 to 505 has biased composition (pro residues); sequence PPGPPGPAGI. 2 stretches are compositionally biased toward low complexity: residues 574-587 and 685-701; these read HPGLPGLPGEQGIP and SVGPVGPIGPAGIPGPM. Pro residues predominate over residues 893 to 902; that stretch reads PGPPGVPGPI. Residues 985 to 1019 are compositionally biased toward low complexity; the sequence is DRGLPGEPGLRGLQGDVGPPGEMGMEGPPGTEGES. 2 stretches are compositionally biased toward gly residues: residues 1035–1044 and 1065–1074; these read GSVGGTGEPG and GVPGGRGLPG. Composition is skewed to low complexity over residues 1132–1145 and 1174–1186; these read SRGPPGKIGKSGPK and HQGQPGPSGLPGP. A compositionally biased stretch (basic and acidic residues) spans 1256-1266; sequence LKGERGSEGNK. Low complexity predominate over residues 1271-1293; that stretch reads APGPSGKPGIPGLQGLLGPKGIQ. A compositionally biased stretch (gly residues) spans 1318-1327; it reads GIRGGPGRTG. Residues 1466-1476 show a composition bias toward pro residues; sequence QPGPPGPPGAP. A Fibrillar collagen NC1 domain is found at 1515–1714; it reads EEIFKTLNYL…YIDSSSVCFL (200 aa).

This sequence belongs to the fibrillar collagen family.

Its subcellular location is the secreted. It is found in the extracellular space. The protein localises to the extracellular matrix. Functionally, may participate in regulating type I collagen fibrillogenesis at specific anatomical locations during fetal development. This chain is Collagen alpha-1(XXIV) chain (COL24A1), found in Homo sapiens (Human).